The sequence spans 663 residues: Zyxin (663 aa).

The segment at 35–438 is disordered; sequence PPKPKINPFK…QQDQTLGSQG (404 aa). Pro residues-rich tracts occupy residues 122-148 and 160-211; these read FPPPPPPEFSEPFPPPIEEFFPSPPPL and VPVP…PPSV. The segment covering 298 to 314 has biased composition (polar residues); sequence PQKTTEPPAEASQSSPK. 2 stretches are compositionally biased toward basic and acidic residues: residues 342–353 and 360–375; these read QRERPRVLEKPR and EPEHEPTVEVQVERTR. Composition is skewed to polar residues over residues 377-393 and 427-438; these read LGPQTESGRSPGAQSTG and TGQQDQTLGSQG. LIM zinc-binding domains are found at residues 470-531, 532-589, and 590-660; these read ELCG…TLEC, CAVC…RRYA, and PRCC…RARA.

This sequence belongs to the zyxin/ajuba family. As to quaternary structure, interacts (via LIM2 domain) with hesx1/anf1. In terms of tissue distribution, at the early gastrula stage, expressed at a low level in the animal hemisphere. Expression rises by the end of gastrulation in the anterior part of the embryo, where it gradually increases by the midneurula stage. During neurulation, expression continues most intensively in the anterior part of the neural plate and around it. At later stages, intensely expressed in the brain and at lower levels in the spinal cord, eyes, nasal placodes, within somites, and around the cement gland.

The protein resides in the cytoplasm. It localises to the cytoskeleton. The protein localises to the cell junction. It is found in the focal adhesion. Its function is as follows. Adhesion plaque protein. May be a component of a signal transduction pathway that mediates adhesion-stimulated changes in gene expression. Suppresses the transcription-repressing activity of hesx1/anf1. The sequence is that of Zyxin from Xenopus laevis (African clawed frog).